The primary structure comprises 1394 residues: Kinesin-like protein KIF27 (1394 aa).

A Kinesin motor domain is found at 5-341 (PIKVAVRIRP…LKYANRARNI (337 aa)). ATP is bound at residue 84–91 (GQTGSGKT). 2 coiled-coil regions span residues 352–418 (QADR…IEQA) and 493–554 (QVVF…ELAK). 2 disordered regions span residues 551–583 (ELAKRSSSMPTSTKESCGDGPDARAPEKRPHTA) and 642–664 (FSDNSDDEDSEGQEKPRVRSRSH). Residues 555-565 (RSSSMPTSTKE) are compositionally biased toward polar residues. Residues 571–580 (PDARAPEKRP) are compositionally biased toward basic and acidic residues. Phosphoserine occurs at positions 643, 646, 672, 675, and 704. A coiled-coil region spans residues 709-980 (LQKLRTSELI…NKKLRSSQAL (272 aa)). The residue at position 999 (Ser-999) is a Phosphoserine. Coiled-coil stretches lie at residues 1010-1078 (TEEK…SIQN), 1118-1152 (NKVINLREAERKQQLQNKEMKMKVLERDNMVHELE), and 1187-1226 (QDGEGIIETLNKYEDKIQQLEKDLYFYKKTSRDLKKRLKD). A compositionally biased stretch (basic and acidic residues) spans 1267–1280 (TENTKLNGREKEVD). The interval 1267 to 1340 (TENTKLNGRE…SQSPPPPQLQ (74 aa)) is disordered. 2 stretches are compositionally biased toward polar residues: residues 1281–1295 (NSSSSLKTPPLTQQI) and 1310–1320 (APSSGQLQSSA). Ser-1365 and Ser-1387 each carry phosphoserine. The tract at residues 1375–1394 (SLGAGVRSVTADSLEEPEES) is disordered.

Belongs to the TRAFAC class myosin-kinesin ATPase superfamily. Kinesin family. KIF27 subfamily. Interacts with STK36.

The protein resides in the cytoplasm. It localises to the cytoskeleton. The protein localises to the cell projection. Its subcellular location is the cilium. In terms of biological role, plays an essential role in motile ciliogenesis. This is Kinesin-like protein KIF27 (Kif27) from Rattus norvegicus (Rat).